A 160-amino-acid polypeptide reads, in one-letter code: Nucleotide-binding protein TERTU_3542 (160 aa).

Belongs to the YajQ family.

Functionally, nucleotide-binding protein. The protein is Nucleotide-binding protein TERTU_3542 of Teredinibacter turnerae (strain ATCC 39867 / T7901).